The chain runs to 407 residues: Na(+)-translocating NADH-quinone reductase subunit F (407 aa).

The chain crosses the membrane as a helical span at residues 6-26; the sequence is IFLAIGMFTAIVLGLVAIILV. Positions 35–127 constitute a 2Fe-2S ferredoxin-type domain; it reads GDVTIQINGE…DMQIRVPEEV (93 aa). Positions 70, 76, 79, and 111 each coordinate [2Fe-2S] cluster. The FAD-binding FR-type domain occupies 130–269; that stretch reads VKKWECTVES…YGPFGEFFAK (140 aa).

Belongs to the NqrF family. In terms of assembly, composed of six subunits; NqrA, NqrB, NqrC, NqrD, NqrE and NqrF. Requires [2Fe-2S] cluster as cofactor. FAD is required as a cofactor.

Its subcellular location is the cell inner membrane. The catalysed reaction is a ubiquinone + n Na(+)(in) + NADH + H(+) = a ubiquinol + n Na(+)(out) + NAD(+). In terms of biological role, NQR complex catalyzes the reduction of ubiquinone-1 to ubiquinol by two successive reactions, coupled with the transport of Na(+) ions from the cytoplasm to the periplasm. The first step is catalyzed by NqrF, which accepts electrons from NADH and reduces ubiquinone-1 to ubisemiquinone by a one-electron transfer pathway. This is Na(+)-translocating NADH-quinone reductase subunit F from Pseudomonas aeruginosa (strain UCBPP-PA14).